A 445-amino-acid chain; its full sequence is Histidinol dehydrogenase (445 aa).

3 residues coordinate NAD(+): Tyr138, Gln199, and Asn222. Residues Ser245, Gln267, and His270 each coordinate substrate. Positions 267 and 270 each coordinate Zn(2+). Catalysis depends on proton acceptor residues Glu335 and His336. Residues His336, Asp369, Glu423, and His428 each contribute to the substrate site. Zn(2+) is bound at residue Asp369. A Zn(2+)-binding site is contributed by His428.

The protein belongs to the histidinol dehydrogenase family. The cofactor is Zn(2+).

It carries out the reaction L-histidinol + 2 NAD(+) + H2O = L-histidine + 2 NADH + 3 H(+). The protein operates within amino-acid biosynthesis; L-histidine biosynthesis; L-histidine from 5-phospho-alpha-D-ribose 1-diphosphate: step 9/9. In terms of biological role, catalyzes the sequential NAD-dependent oxidations of L-histidinol to L-histidinaldehyde and then to L-histidine. The chain is Histidinol dehydrogenase from Burkholderia mallei (strain ATCC 23344).